Here is an 878-residue protein sequence, read N- to C-terminus: Alanine--tRNA ligase (878 aa).

Zn(2+)-binding residues include His564, His568, Cys665, and His669.

The protein belongs to the class-II aminoacyl-tRNA synthetase family. The cofactor is Zn(2+).

It localises to the cytoplasm. It catalyses the reaction tRNA(Ala) + L-alanine + ATP = L-alanyl-tRNA(Ala) + AMP + diphosphate. Catalyzes the attachment of alanine to tRNA(Ala) in a two-step reaction: alanine is first activated by ATP to form Ala-AMP and then transferred to the acceptor end of tRNA(Ala). Also edits incorrectly charged Ser-tRNA(Ala) and Gly-tRNA(Ala) via its editing domain. The polypeptide is Alanine--tRNA ligase (Natranaerobius thermophilus (strain ATCC BAA-1301 / DSM 18059 / JW/NM-WN-LF)).